Reading from the N-terminus, the 644-residue chain is Keratin, type II cytoskeletal 1 (644 aa).

Residues 2 to 179 are head; that stretch reads SRQFSSRSGY…DPEIQKVKSR (178 aa). Residue R12 is modified to Omega-N-methylarginine. 2 positions are modified to phosphoserine: S18 and S21. A compositionally biased stretch (low complexity) spans 22–38; it reads AGIINYQRRTTSSSTRR. A disordered region spans residues 22–47; it reads AGIINYQRRTTSSSTRRSGGGGGRFS. R45 carries the post-translational modification Omega-N-methylarginine. Phosphoserine is present on S66. R82 is subject to Omega-N-methylarginine. Residues 180 to 215 form a coil 1A region; it reads EREQIKSLNNQFASFIDKVRFLEQQNQVLQTKWELL. Positions 180–493 constitute an IF rod domain; that stretch reads EREQIKSLNN…TLLEGEESRM (314 aa). The segment at 216–234 is linker 1; it reads QQVDTSTRTHNLEPYFESF. Residues 235–326 form a coil 1B region; that stretch reads INNLRRRVDQ…ALYQAELSQM (92 aa). K276 carries the N6,N6-dimethyllysine modification. The segment at 327–350 is linker 12; it reads QTQISETNVILSMDNNRSLDLDSI. Phosphoserine is present on S344. Residues 351-489 form a coil 2 region; it reads IAEVKAQYED…ATYRTLLEGE (139 aa). 2 disordered regions span residues 489 to 523 and 568 to 644; these read EESR…GGGG and SGGG…GVTR. The segment at 490 to 644 is tail; it reads ESRMSGECAP…VSTTYSGVTR (155 aa). Residues 501–511 show a composition bias toward low complexity; the sequence is VSVSVSTSHTT. Composition is skewed to gly residues over residues 513–523 and 568–620; these read SGGGSRGGGGG and SGGG…GSSS. Omega-N-methylarginine is present on residues R518 and R588. Low complexity predominate over residues 621–631; sequence GGVKSSGGSSS. Polar residues predominate over residues 632–644; it reads VKFVSTTYSGVTR.

It belongs to the intermediate filament family. In terms of assembly, heterotetramer of two type I and two type II keratins. Heterodimer with KRT10. Two heterodimers of KRT1 and KRT10 form a heterotetramer. Forms a heterodimer with KRT14; the interaction is more abundant in the absence of KRT5. Interacts with PLEC isoform 1C, when in a heterodimer with KRT10. Interacts with ITGB1 in the presence of RACK1 and SRC, and with RACK1. Interacts with C1QBP; the association represents a cell surface kininogen receptor. Interacts with EPPK1; interaction is dependent of higher-order structure of intermediate filament. In terms of processing, undergoes deimination of some arginine residues (citrullination). The source of this protein is neonatal foreskin. The 67-kDa type II keratins are expressed in terminally differentiating epidermis.

It localises to the cell membrane. Its subcellular location is the cytoplasm. Functionally, may regulate the activity of kinases such as PKC and SRC via binding to integrin beta-1 (ITB1) and the receptor of activated protein C kinase 1 (RACK1). In complex with C1QBP is a high affinity receptor for kininogen-1/HMWK. The protein is Keratin, type II cytoskeletal 1 (KRT1) of Homo sapiens (Human).